An 87-amino-acid polypeptide reads, in one-letter code: NADH-ubiquinone oxidoreductase chain 4L (87 aa).

A run of 3 helical transmembrane segments spans residues Met1–Asn21, Ile22–Ile42, and Leu57–Phe77.

It belongs to the complex I subunit 4L family. Core subunit of respiratory chain NADH dehydrogenase (Complex I) which is composed of 45 different subunits.

It localises to the mitochondrion inner membrane. It carries out the reaction a ubiquinone + NADH + 5 H(+)(in) = a ubiquinol + NAD(+) + 4 H(+)(out). Functionally, core subunit of the mitochondrial membrane respiratory chain NADH dehydrogenase (Complex I) which catalyzes electron transfer from NADH through the respiratory chain, using ubiquinone as an electron acceptor. The sequence is that of NADH-ubiquinone oxidoreductase chain 4L (ND4L) from Moniliophthora perniciosa (strain FA553 / isolate CP02) (Witches'-broom disease fungus).